The sequence spans 621 residues: Putative zinc metalloprotease CPn_0344/CP_0416/CPj0344/CpB0350 (621 aa).

His-20 lines the Zn(2+) pocket. The active site involves Glu-21. His-24 is a Zn(2+) binding site. 3 consecutive transmembrane segments (helical) span residues 103-125 (ILVLVAGPLANILLAVLAFSILY), 561-583 (VLNLLPIPVLDGGYILLCLWEIV), and 596-613 (ILVPFTFLLIIFFIFLTF).

It belongs to the peptidase M50B family. It depends on Zn(2+) as a cofactor.

It localises to the cell inner membrane. This is Putative zinc metalloprotease CPn_0344/CP_0416/CPj0344/CpB0350 from Chlamydia pneumoniae (Chlamydophila pneumoniae).